The following is a 144-amino-acid chain: Urease subunit beta (144 aa).

A compositionally biased stretch (low complexity) spans 110-119 (HAAPAAPAIP). The segment at 110 to 144 (HAAPAAPAIPARHESAAGDAPSPLKERAGFDNETR) is disordered. Positions 133–144 (LKERAGFDNETR) are enriched in basic and acidic residues.

This sequence belongs to the urease beta subunit family. Heterotrimer of UreA (gamma), UreB (beta) and UreC (alpha) subunits. Three heterotrimers associate to form the active enzyme.

The protein localises to the cytoplasm. It carries out the reaction urea + 2 H2O + H(+) = hydrogencarbonate + 2 NH4(+). It functions in the pathway nitrogen metabolism; urea degradation; CO(2) and NH(3) from urea (urease route): step 1/1. The protein is Urease subunit beta of Micrococcus luteus (strain ATCC 4698 / DSM 20030 / JCM 1464 / CCM 169 / CCUG 5858 / IAM 1056 / NBRC 3333 / NCIMB 9278 / NCTC 2665 / VKM Ac-2230) (Micrococcus lysodeikticus).